The sequence spans 83 residues: Evasin P1090 (83 aa).

Positions 1–24 are cleaved as a signal peptide; that stretch reads MEVKIFAFLQIAVLIAFSLHLASA. Intrachain disulfides connect Cys-44–Cys-63, Cys-48–Cys-65, and Cys-59–Cys-76. Asn-47 carries N-linked (GlcNAc...) asparagine glycosylation. N-linked (GlcNAc...) asparagine glycosylation is present at Asn-70.

Its subcellular location is the secreted. Salivary chemokine-binding protein which binds to host chemokines CXCL1, CXCL2, CXCL3, CXCL5, CXCL6, CXCL10, CXCL11 and CXCL13. This chain is Evasin P1090, found in Ixodes ricinus (Common tick).